The chain runs to 638 residues: Threonine--tRNA ligase (638 aa).

A TGS domain is found at 1–59 (MEKIKVKIKGKEYEVEKGTPLGKIFELAGIKDALGGVINGKIIDLQTPVRESGEIKPVY). Positions 243–536 (DHRRLGKELE…LLEHYAGLLP (294 aa)) are catalytic. Residues cysteine 336, histidine 387, and histidine 513 each contribute to the Zn(2+) site.

The protein belongs to the class-II aminoacyl-tRNA synthetase family. In terms of assembly, homodimer. Zn(2+) serves as cofactor.

Its subcellular location is the cytoplasm. The catalysed reaction is tRNA(Thr) + L-threonine + ATP = L-threonyl-tRNA(Thr) + AMP + diphosphate + H(+). Its function is as follows. Catalyzes the attachment of threonine to tRNA(Thr) in a two-step reaction: L-threonine is first activated by ATP to form Thr-AMP and then transferred to the acceptor end of tRNA(Thr). Also edits incorrectly charged L-seryl-tRNA(Thr). The polypeptide is Threonine--tRNA ligase (Aquifex aeolicus (strain VF5)).